We begin with the raw amino-acid sequence, 173 residues long: Protein GrpE (173 aa).

The protein belongs to the GrpE family. In terms of assembly, homodimer.

The protein localises to the cytoplasm. Its function is as follows. Participates actively in the response to hyperosmotic and heat shock by preventing the aggregation of stress-denatured proteins, in association with DnaK and GrpE. It is the nucleotide exchange factor for DnaK and may function as a thermosensor. Unfolded proteins bind initially to DnaJ; upon interaction with the DnaJ-bound protein, DnaK hydrolyzes its bound ATP, resulting in the formation of a stable complex. GrpE releases ADP from DnaK; ATP binding to DnaK triggers the release of the substrate protein, thus completing the reaction cycle. Several rounds of ATP-dependent interactions between DnaJ, DnaK and GrpE are required for fully efficient folding. This Campylobacter fetus subsp. fetus (strain 82-40) protein is Protein GrpE.